We begin with the raw amino-acid sequence, 426 residues long: 3-phosphoshikimate 1-carboxyvinyltransferase (426 aa).

Lysine 22, serine 23, and arginine 27 together coordinate 3-phosphoshikimate. Lysine 22 contributes to the phosphoenolpyruvate binding site. Residues glycine 96 and arginine 124 each coordinate phosphoenolpyruvate. 7 residues coordinate 3-phosphoshikimate: serine 170, serine 171, glutamine 172, serine 198, aspartate 314, asparagine 337, and lysine 341. Glutamine 172 lines the phosphoenolpyruvate pocket. Aspartate 314 serves as the catalytic Proton acceptor. Phosphoenolpyruvate contacts are provided by arginine 345, arginine 387, and lysine 412.

This sequence belongs to the EPSP synthase family. In terms of assembly, monomer.

It localises to the cytoplasm. It catalyses the reaction 3-phosphoshikimate + phosphoenolpyruvate = 5-O-(1-carboxyvinyl)-3-phosphoshikimate + phosphate. Its pathway is metabolic intermediate biosynthesis; chorismate biosynthesis; chorismate from D-erythrose 4-phosphate and phosphoenolpyruvate: step 6/7. Catalyzes the transfer of the enolpyruvyl moiety of phosphoenolpyruvate (PEP) to the 5-hydroxyl of shikimate-3-phosphate (S3P) to produce enolpyruvyl shikimate-3-phosphate and inorganic phosphate. The polypeptide is 3-phosphoshikimate 1-carboxyvinyltransferase (Shewanella sp. (strain W3-18-1)).